Here is a 105-residue protein sequence, read N- to C-terminus: Co-chaperonin GroES (105 aa).

Belongs to the GroES chaperonin family. In terms of assembly, heptamer of 7 subunits arranged in a ring. Interacts with the chaperonin GroEL.

Its subcellular location is the cytoplasm. Its function is as follows. Together with the chaperonin GroEL, plays an essential role in assisting protein folding. The GroEL-GroES system forms a nano-cage that allows encapsulation of the non-native substrate proteins and provides a physical environment optimized to promote and accelerate protein folding. GroES binds to the apical surface of the GroEL ring, thereby capping the opening of the GroEL channel. In Methylovorus sp. (strain SS1 / DSM 11726), this protein is Co-chaperonin GroES.